We begin with the raw amino-acid sequence, 544 residues long: MNSFSFDGSDLLAKSDATDNVRAFSVSEISGALKRTVEDAFSHIRVRGEISGFTQAGSGHCYLALKDDKAVLDSVIWRGVVSRISFRPENGMEVIATGRLTTYAGRSRYQLVIEQLEIAGQGALMALLDRRRRMLAEEGLFNADRKRALPFMPKIIGVVSSPSGAVIRDILHRLADRCPTHVILWPVPVQGDQAAAKVAAAVRGFSALKAGDAIPRPDLLIVARGGGSLEDLWPFNEEILVRAVAESSIPVISAVGHETDTTLCDYAADLRAPTPTAAAELAVPVRSELVNGLNNLHLRMNNAIARHAKLSEERLEAVRRRLPDGERLLAPFIQLFDDRASQLERDISERMTHARHKLNFYAATLRPALLQARIAREQARLSACRLPTGQRLVIQEQQKLDNVTRRLKQAYQQRLSHADLRFKFLAEKLQPLLLEQRWQQKAELLAACSLKPELVTARLNIWQKNIDQLWRVAEQAHPDKILAKGYARVEDSHSHVVSNAHDAKTHKRLNLIFHDGSVWVAPETPPKSRKADNPPEPPEQTSFL.

Residues 522-544 (PETPPKSRKADNPPEPPEQTSFL) are disordered.

It belongs to the XseA family. Heterooligomer composed of large and small subunits.

Its subcellular location is the cytoplasm. The catalysed reaction is Exonucleolytic cleavage in either 5'- to 3'- or 3'- to 5'-direction to yield nucleoside 5'-phosphates.. Its function is as follows. Bidirectionally degrades single-stranded DNA into large acid-insoluble oligonucleotides, which are then degraded further into small acid-soluble oligonucleotides. The polypeptide is Exodeoxyribonuclease 7 large subunit (Zymomonas mobilis subsp. mobilis (strain ATCC 31821 / ZM4 / CP4)).